The following is a 259-amino-acid chain: UPF0739 protein C1orf74 homolog (259 aa).

This sequence belongs to the UPF0739 family.

In Danio rerio (Zebrafish), this protein is UPF0739 protein C1orf74 homolog.